Reading from the N-terminus, the 190-residue chain is Cancer-related nucleoside-triphosphatase (190 aa).

Ala-2 carries the N-acetylalanine modification. ATP is bound by residues 9-16 (GPPGVGKT) and 109-116 (VCVIDEIG). Lys-165 carries the post-translational modification N6-acetyllysine.

The protein belongs to the THEP1 NTPase family. In terms of assembly, monomer.

The enzyme catalyses a ribonucleoside 5'-triphosphate + H2O = a ribonucleoside 5'-diphosphate + phosphate + H(+). It catalyses the reaction 5-methyl-UTP + H2O = 5-methyl-UDP + phosphate + H(+). It carries out the reaction CTP + H2O = CDP + phosphate + H(+). The catalysed reaction is ATP + H2O = ADP + phosphate + H(+). The enzyme catalyses GTP + H2O = GDP + phosphate + H(+). Its function is as follows. Has nucleotide phosphatase activity towards ATP, GTP, CTP, TTP and UTP. Hydrolyzes nucleoside diphosphates with lower efficiency. This chain is Cancer-related nucleoside-triphosphatase, found in Homo sapiens (Human).